The primary structure comprises 22 residues: Alpha-amylase inhibitor DR4 (22 aa).

The disordered stretch occupies residues 1-22; sequence SGGGKEAAETFNRVESHPRPDA.

Its function is as follows. Inhibits insect alpha-amylases. This Delonix regia (Royal poinciana) protein is Alpha-amylase inhibitor DR4.